The chain runs to 353 residues: UDP-N-acetylglucosamine--N-acetylmuramyl-(pentapeptide) pyrophosphoryl-undecaprenol N-acetylglucosamine transferase (353 aa).

Residues 10 to 12, N124, S183, and Q283 each bind UDP-N-acetyl-alpha-D-glucosamine; that span reads TGG.

Belongs to the glycosyltransferase 28 family. MurG subfamily.

It localises to the cell inner membrane. The catalysed reaction is di-trans,octa-cis-undecaprenyl diphospho-N-acetyl-alpha-D-muramoyl-L-alanyl-D-glutamyl-meso-2,6-diaminopimeloyl-D-alanyl-D-alanine + UDP-N-acetyl-alpha-D-glucosamine = di-trans,octa-cis-undecaprenyl diphospho-[N-acetyl-alpha-D-glucosaminyl-(1-&gt;4)]-N-acetyl-alpha-D-muramoyl-L-alanyl-D-glutamyl-meso-2,6-diaminopimeloyl-D-alanyl-D-alanine + UDP + H(+). It functions in the pathway cell wall biogenesis; peptidoglycan biosynthesis. Cell wall formation. Catalyzes the transfer of a GlcNAc subunit on undecaprenyl-pyrophosphoryl-MurNAc-pentapeptide (lipid intermediate I) to form undecaprenyl-pyrophosphoryl-MurNAc-(pentapeptide)GlcNAc (lipid intermediate II). The protein is UDP-N-acetylglucosamine--N-acetylmuramyl-(pentapeptide) pyrophosphoryl-undecaprenol N-acetylglucosamine transferase of Helicobacter pylori (strain ATCC 700392 / 26695) (Campylobacter pylori).